Consider the following 142-residue polypeptide: MGRFIFVSFSLLVVFLSLSGTGAHCPSGWYTYEGHCYRVFQQNMTWEDAEKFCTQQYEKSHLVSFRSSEEVDFLVSLLKVDLFWMGRRDIWNERRLQWSDGTKVDYKDWRAKPECIVCRATDNHWLSTSCSETHNVICKFET.

The signal sequence occupies residues 1-23 (MGRFIFVSFSLLVVFLSLSGTGA). C25 and C36 are oxidised to a cystine. Positions 32–139 (YEGHCYRVFQ…CSETHNVICK (108 aa)) constitute a C-type lectin domain. N43 carries N-linked (GlcNAc...) asparagine glycosylation. 2 disulfide bridges follow: C53–C138 and C115–C130.

It belongs to the snaclec family. As to quaternary structure, heterodimer; disulfide-linked. As to expression, expressed by the venom gland.

The protein resides in the secreted. Interferes with one step of hemostasis (modulation of platelet aggregation, or coagulation cascade, for example). The protein is Snaclec 2 of Sistrurus catenatus edwardsii (Desert massasauga).